The sequence spans 415 residues: ATP-dependent Clp protease ATP-binding subunit ClpX (415 aa).

The region spanning 1–52 (MAESKNNKKRCSFCGRSENEVGFLITGMNGYICDSCATQAYEITQEAMGAGK) is the ClpX-type ZB domain. Positions 11, 14, 33, and 36 each coordinate Zn(2+). 121 to 128 (STGTGKTL) contacts ATP.

Belongs to the ClpX chaperone family. Component of the ClpX-ClpP complex. Forms a hexameric ring that, in the presence of ATP, binds to fourteen ClpP subunits assembled into a disk-like structure with a central cavity, resembling the structure of eukaryotic proteasomes.

In terms of biological role, ATP-dependent specificity component of the Clp protease. It directs the protease to specific substrates. Can perform chaperone functions in the absence of ClpP. This Bacteroides fragilis (strain ATCC 25285 / DSM 2151 / CCUG 4856 / JCM 11019 / LMG 10263 / NCTC 9343 / Onslow / VPI 2553 / EN-2) protein is ATP-dependent Clp protease ATP-binding subunit ClpX.